The chain runs to 503 residues: AMP phosphorylase (503 aa).

Residues glycine 168, 194-199, and serine 203 contribute to the AMP site; that span reads SRAITG. The active-site Proton donor is the aspartate 256. AMP contacts are provided by serine 264 and lysine 288.

The protein belongs to the thymidine/pyrimidine-nucleoside phosphorylase family. Type 2 subfamily.

It carries out the reaction AMP + phosphate = alpha-D-ribose 1,5-bisphosphate + adenine. It catalyses the reaction CMP + phosphate = cytosine + alpha-D-ribose 1,5-bisphosphate. The catalysed reaction is UMP + phosphate = alpha-D-ribose 1,5-bisphosphate + uracil. Functionally, catalyzes the conversion of AMP and phosphate to adenine and ribose 1,5-bisphosphate (R15P). Exhibits phosphorylase activity toward CMP and UMP in addition to AMP. Functions in an archaeal AMP degradation pathway, together with R15P isomerase and RubisCO. The protein is AMP phosphorylase of Methanocella arvoryzae (strain DSM 22066 / NBRC 105507 / MRE50).